Reading from the N-terminus, the 528-residue chain is ADP,ATP carrier protein 1 (528 aa).

Transmembrane regions (helical) follow at residues 24–44 (LKKV…YTIL), 63–83 (IPFI…LIYA), 93–113 (ALFF…PVVI), 124–144 (AFAD…IAML), 149–169 (FAVF…LMFW), 184–204 (FYAL…PAII), 220–240 (WGVS…IIAA), 284–304 (YMLL…LVEV), 327–347 (FSFW…GNVI), 356–376 (ALVT…LVIF), 381–401 (TGLV…VGAI), and 463–483 (IGAM…VWLT).

It belongs to the ADP/ATP translocase tlc family.

The protein localises to the cell membrane. The polypeptide is ADP,ATP carrier protein 1 (tlcA) (Chlamydia trachomatis serovar D (strain ATCC VR-885 / DSM 19411 / UW-3/Cx)).